The following is a 349-amino-acid chain: Beta-glucanase (349 aa).

The first 27 residues, 1-27, serve as a signal peptide directing secretion; the sequence is MNIKKTAVKSALAVAAAAAALTTNVSA. A GH16 domain is found at 28–197; sequence KDFSGAELYT…WVKVYKYTPG (170 aa). Glutamate 79 functions as the Nucleophile in the catalytic mechanism. Glutamate 83 acts as the Proton donor in catalysis. A disordered region spans residues 258–311; it reads SFNGQVPRDDEPAPQSSSSAPASSSSVPASSSSVPASSSSAFVPPSSSSATNAI. Over residues 270 to 307 the composition is skewed to low complexity; the sequence is APQSSSSAPASSSSVPASSSSVPASSSSAFVPPSSSSA. A run of 5 repeats spans residues 271-277, 278-284, 285-291, 292-298, and 301-307. The 5 X 7 AA tandem repeats of P-X-S-S-S-S-X stretch occupies residues 271–307; it reads PQSSSSAPASSSSVPASSSSVPASSSSAFVPPSSSSA.

This sequence belongs to the glycosyl hydrolase 16 family.

It catalyses the reaction Hydrolysis of (1-&gt;4)-beta-D-glucosidic linkages in beta-D-glucans containing (1-&gt;3)- and (1-&gt;4)-bonds.. This chain is Beta-glucanase, found in Fibrobacter succinogenes (strain ATCC 19169 / S85).